We begin with the raw amino-acid sequence, 1235 residues long: ATP-dependent DNA helicase mph1 (1235 aa).

Disordered stretches follow at residues 20–78 and 96–148; these read LTQA…YRIH and DEMP…VHSP. Residues 61 to 72 are compositionally biased toward basic and acidic residues; that stretch reads SRSDNDEADEKK. Polar residues predominate over residues 137 to 148; sequence AKTQKQNIVHSP. One can recognise a Helicase ATP-binding domain in the interval 272-440; it reads IVHKGLFNNL…EVIDNLEIAE (169 aa). 285-292 is a binding site for ATP; the sequence is LPTGLGKT. A DEAH box motif is present at residues 388 to 391; the sequence is DEAH. In terms of domain architecture, Helicase C-terminal spans 608–784; sequence KLTYLCDTVL…GSRFTFRHDL (177 aa). Disordered stretches follow at residues 808-827, 944-1117, and 1144-1235; these read NTQD…RKKL, SRLQ…PPLM, and TGAK…DSDE. A compositionally biased stretch (basic and acidic residues) spans 947 to 958; the sequence is QRPEDRDNKPYG. The segment covering 1015–1027 has biased composition (basic residues); it reads VAPKKAKPRRGRA. Residues 1065–1074 are compositionally biased toward basic and acidic residues; sequence PGERVDRTSD. Residues 1075-1085 are compositionally biased toward acidic residues; the sequence is MEELEADDDSD. Polar residues-rich tracts occupy residues 1095-1114 and 1146-1159; these read PTQT…SSSP and AKNS…MTQE. Low complexity predominate over residues 1160 to 1170; the sequence is SSDGGDSMDSD. The span at 1194-1209 shows a compositional bias: polar residues; the sequence is PSSSVFSSGQKATPNM.

Belongs to the DEAD box helicase family. DEAH subfamily. FANCM sub-subfamily. As to quaternary structure, interacts with the MHF histone-fold complex to form the FANCM-MHF complex.

The protein localises to the nucleus. It catalyses the reaction ATP + H2O = ADP + phosphate + H(+). Its function is as follows. ATP-dependent DNA helicase involved in DNA damage repair by homologous recombination and in genome maintenance. Capable of unwinding D-loops. Plays a role in limiting crossover recombinants during mitotic DNA double-strand break (DSB) repair. Component of a FANCM-MHF complex which promotes gene conversion at blocked replication forks, probably by reversal of the stalled fork. The chain is ATP-dependent DNA helicase mph1 from Sclerotinia sclerotiorum (strain ATCC 18683 / 1980 / Ss-1) (White mold).